An 84-amino-acid polypeptide reads, in one-letter code: Defensin-like protein 37 (84 aa).

Positions 1–24 (MAVKLIYLFLFLYIALLISGRTMS) are cleaved as a signal peptide. Disulfide bonds link Cys-46-Cys-67, Cys-52-Cys-79, and Cys-56-Cys-81.

This sequence belongs to the DEFL family.

The protein resides in the secreted. This is Defensin-like protein 37 (EDA21) from Arabidopsis thaliana (Mouse-ear cress).